We begin with the raw amino-acid sequence, 149 residues long: Transcriptional regulator MraZ (149 aa).

SpoVT-AbrB domains follow at residues 5-52 (ITTL…PLPE) and 81-124 (AEEC…DSMV).

Belongs to the MraZ family. Forms oligomers.

The protein resides in the cytoplasm. Its subcellular location is the nucleoid. This Nitrosococcus oceani (strain ATCC 19707 / BCRC 17464 / JCM 30415 / NCIMB 11848 / C-107) protein is Transcriptional regulator MraZ.